Reading from the N-terminus, the 323-residue chain is Protoheme IX farnesyltransferase (323 aa).

The next 8 membrane-spanning stretches (helical) occupy residues 28 to 48 (IIPL…EGRV), 50 to 70 (LFTL…AQVM), 101 to 121 (FIFA…FVNL), 122 to 142 (LSGL…THLL), 150 to 170 (IVIG…AVTG), 178 to 198 (ILFA…ALMI), 235 to 255 (FLLV…AIIL), and 282 to 302 (FSIF…LPLT).

It belongs to the UbiA prenyltransferase family. Protoheme IX farnesyltransferase subfamily.

The protein localises to the cell inner membrane. It catalyses the reaction heme b + (2E,6E)-farnesyl diphosphate + H2O = Fe(II)-heme o + diphosphate. The protein operates within porphyrin-containing compound metabolism; heme O biosynthesis; heme O from protoheme: step 1/1. Functionally, converts heme B (protoheme IX) to heme O by substitution of the vinyl group on carbon 2 of heme B porphyrin ring with a hydroxyethyl farnesyl side group. The chain is Protoheme IX farnesyltransferase from Rippkaea orientalis (strain PCC 8801 / RF-1) (Cyanothece sp. (strain PCC 8801)).